The following is a 446-amino-acid chain: Citrate/sodium symporter (446 aa).

Residues M1–P27 are Cytoplasmic-facing. A helical transmembrane segment spans residues L28–Y44. Topologically, residues N45 to D50 are periplasmic. A helical membrane pass occupies residues I51 to R71. Topologically, residues L72–G80 are cytoplasmic. The chain crosses the membrane as a helical span at residues G81–Y95. Topologically, residues A96–N115 are periplasmic. The helical transmembrane segment at F116–L130 threads the bilayer. Residues S131 to L136 lie on the Cytoplasmic side of the membrane. A helical membrane pass occupies residues L137–F166. At G167–I181 the chain is on the periplasmic side. The Na(+) site is built by I181 and G183. The helical intramembrane region spans M182 to G189. 2 residues coordinate citrate: N186 and G187. Topologically, residues A190–A212 are periplasmic. The helical transmembrane segment at I213–I233 threads the bilayer. The Cytoplasmic portion of the chain corresponds to G234–T264. Residues H265–K287 form a helical membrane-spanning segment. At K288 to H299 the chain is on the periplasmic side. The helical transmembrane segment at Y300–G315 threads the bilayer. The Cytoplasmic portion of the chain corresponds to L316–R327. Residues L328 to L351 traverse the membrane as a helical segment. At Q352–T359 the chain is on the periplasmic side. Residues F360 to G381 form a helical membrane-spanning segment. Topologically, residues W382–C398 are cytoplasmic. Residues M399 and N401 each coordinate Na(+). An intramembrane region (helical) is located at residues M399–G406. R402, G404, and S405 together coordinate citrate. Topologically, residues D407–R416 are cytoplasmic. The chain crosses the membrane as a helical span at residues M417–A438. R428 contributes to the citrate binding site. Over S439 to I446 the chain is Periplasmic.

This sequence belongs to the 2-hydroxycarboxylate transporter (2-HCT) (TC 2.A.24) family. In terms of assembly, homodimer.

It is found in the cell inner membrane. It carries out the reaction citrate(out) + 2 Na(+)(out) = citrate(in) + 2 Na(+)(in). In the absence of Na(+), transport is inhibited by the thiol reagents N-ethylmaleimide (NEM) and the methanethiosulfonate (MTS) derivatives MTSEA, MTSET and MTSES. However, inactivation by NEM, MTSES and MTSET is prevented by the presence of Na(+). In the absence of Na(+), the substrate citrate has no effect on the inactivation by permeable or impermeable thiol reagents. In contrast, when subsaturating concentrations of Na(+) are present, citrate significantly reduces inactivation, suggesting ordered binding of the substrate and co-ion; citrate is bound after Na(+). The membrane impermeable bulky maleimide AmdiS does not inactivate the transporter in right-side-out membrane vesicles. The apparent affinity for Na(+) decreases with increasing proton concentration. Protons cannot replace Na(+) in the translocation step but the decrease in apparent affinity for Na(+) towards lower pH suggests that protons can compete with Na(+) for the cation-binding sites. Its function is as follows. Secondary active transporter that catalyzes the uptake of citrate across the membrane with the concomitant uptake of sodium. There are conflicting data regarding exact substrate stoichiometry: the sodium/citrate stoichiometry was predicted to be 1, but the latest studies suggest that CitS transports citrate in symport with 2 sodium ions. Transports citrate as a divalent citrate anion, H-citrate(2-). Shows narrow substrate specificity and is very specific, transporting only citrate and to a low extent citromalate. Symport of Na(+) is absolutely required in the range pH 5-7 because no uptake can be detected in the absence of Na(+). Lithium can replace Na(+) in the symport reaction but it takes about a 200-fold higher concentration of Li(+) over Na(+) to achieve the same rate of uptake. This chain is Citrate/sodium symporter, found in Klebsiella pneumoniae.